Reading from the N-terminus, the 163-residue chain is Probable ribosome biogenesis protein RLP24 (163 aa).

It belongs to the eukaryotic ribosomal protein eL24 family. As to quaternary structure, associated with nucleolar and cytoplasmic pre-60S particles. At the end of biogenesis it dissociates from cytoplasmic pre-60S particles and is likely to be exchanged for its ribosomal homolog, RPL24.

It localises to the nucleus. Its subcellular location is the nucleolus. Its function is as follows. Involved in the biogenesis of the 60S ribosomal subunit. Ensures the docking of GTPBP4/NOG1 to pre-60S particles. This chain is Probable ribosome biogenesis protein RLP24 (RSL24D1), found in Pongo abelii (Sumatran orangutan).